The sequence spans 653 residues: Aspartate--tRNA ligase, mitochondrial (653 aa).

A mitochondrion-targeting transit peptide spans 1–46; that stretch reads MYLGFWLSRLCRGLSRPIGKTMRPIWGSLSRNLALSSQRIPEFSSF. Threonine 218 is modified (phosphothreonine). The residue at position 241 (serine 241) is a Phosphoserine. The tract at residues 243-246 is aspartate; it reads QQFK. L-aspartate is bound at residue arginine 265. Residues 265 to 267 and glutamate 534 each bind ATP; that span reads RDE. Arginine 541 contributes to the L-aspartate binding site. An ATP-binding site is contributed by 583 to 586; that stretch reads GLDR.

Belongs to the class-II aminoacyl-tRNA synthetase family. Type 1 subfamily. As to quaternary structure, homodimer.

The protein resides in the mitochondrion matrix. It localises to the mitochondrion membrane. The catalysed reaction is tRNA(Asp) + L-aspartate + ATP = L-aspartyl-tRNA(Asp) + AMP + diphosphate. Its function is as follows. Catalyzes the attachment of aspartate to tRNA(Asp) in a two-step reaction: aspartate is first activated by ATP to form Asp-AMP and then transferred to the acceptor end of tRNA(Asp). The polypeptide is Aspartate--tRNA ligase, mitochondrial (Dars2) (Mus musculus (Mouse)).